A 663-amino-acid chain; its full sequence is Syntabulin (663 aa).

Disordered stretches follow at residues 1-202 (MGPL…PREK) and 216-267 (VNIH…PEQY). The sufficient for interaction with KIF5B stretch occupies residues 2–417 (GPLRESKKEH…DTMADGLSLE (416 aa)). S50 is modified (phosphoserine). A compositionally biased stretch (low complexity) spans 57–73 (FNPSSSGRSARTVSSNS). A compositionally biased stretch (polar residues) spans 81-97 (CPSSQSVSPVKTPSDAG). Phosphoserine is present on S107. 3 stretches are compositionally biased toward low complexity: residues 145–158 (EADF…GSIS), 188–198 (SSHKPGSSPSS), and 221–241 (SYAP…SDCS). The stretch at 271 to 353 (LQQKEVTVRH…MRSSLADKDK (83 aa)) forms a coiled coil. Positions 310-417 (REDWIEEECH…DTMADGLSLE (108 aa)) are sufficient for interaction with STX1A. 2 positions are modified to phosphoserine: S396 and S555. Residues 606–626 (SFLVDLLAVAAPVVPTVLWAF) traverse the membrane as a helical segment.

As to quaternary structure, interacts with STX1A and KIF5B. Isoform 3, isoform 4 and isoform 5 are expressed in HeLa cell line (at protein level). Isoform 3 is expressed in fetal and adult brain. Isoform 4 is expressed in numerous fetal tissues (brain, kidney, liver, lung, and thymus) and in adult brain, kidney, liver, lung, pancreas, colon, prostate, small intestine, testis and thymus. Isoform 5 is expressed in fetal brain, brain and small intestine.

The protein localises to the cytoplasm. The protein resides in the cytoskeleton. Its subcellular location is the cytoplasmic vesicle. It is found in the golgi apparatus membrane. Its function is as follows. Part of a kinesin motor-adapter complex that is critical for the anterograde axonal transport of active zone components and contributes to activity-dependent presynaptic assembly during neuronal development. In Homo sapiens (Human), this protein is Syntabulin (SYBU).